The chain runs to 489 residues: Argininosuccinate lyase (489 aa).

A disordered region spans residues 462 to 489; the sequence is QARYQQTEPAEEPPLPPSSPGSGLPLES.

Belongs to the lyase 1 family. Argininosuccinate lyase subfamily.

The protein resides in the cytoplasm. The enzyme catalyses 2-(N(omega)-L-arginino)succinate = fumarate + L-arginine. It functions in the pathway amino-acid biosynthesis; L-arginine biosynthesis; L-arginine from L-ornithine and carbamoyl phosphate: step 3/3. The protein is Argininosuccinate lyase of Synechococcus sp. (strain JA-3-3Ab) (Cyanobacteria bacterium Yellowstone A-Prime).